Consider the following 706-residue polypeptide: MASSAQIHGLGTASFSSLKKPSSISGNSKTLFFGQRLNSNHSPFTRAAFPKLSSKTFKKGFTLRVVSEKVVGIDLGTTNSAVAAMEGGKPTIITNAEGQRTTPSVVAYTKNGDRLVGQIAKRQAVVNPENTFFSVKRFIGRKMSEVDEESKQVSYRVIRDDNGNVKLDCPAIGKSFAAEEISAQVLRKLVDDASKFLNDKVTKAVVTVPAYFNDSQRTATKDAGRIAGLEVLRIINEPTAASLAYGFERKNNETILVFDLGGGTFDVSVLEVGDGVFEVLSTSGDTHLGGDDFDKRVVDWLAGDFKRDEGIDLLKDKQALQRLTETAEKAKMELSSLSQTNISLPFITATADGPKHIETTLTRAKFEELCSDLLDRLRTPVENSLRDAKLSIKDIDEVILVGGSTRIPAVQELVKKLIGKDPNVTVNPDEVVALGAAVQAGVLAGDVSDIVLLDVSPLSLGLETLGGVMTKIIPRNTTLPTSKSEVFSTAADGQTSVEINVLQGEREFVRDNKSLGSFRLDGIPPAPRGVPQIEVKFDIDANGILSVAAIDKGTGKKQDITITGASTLPGDEVERMVSEAERFSKEDKEKREAIDTKNQADSVVYQTEKQLKELGEKVPAPVKEKVEAKLGELKEAITGGSTQTIKDALAALNQEVMQLGQSLYNQPGAAGQAGPTPPGSESGPSESSGKEGPEGDVIDADFTDSK.

The transit peptide at 1-67 (MASSAQIHGL…KKGFTLRVVS (67 aa)) directs the protein to the chloroplast. Residues 663-706 (LYNQPGAAGQAGPTPPGSESGPSESSGKEGPEGDVIDADFTDSK) are disordered. The span at 666–687 (QPGAAGQAGPTPPGSESGPSES) shows a compositional bias: low complexity. A compositionally biased stretch (acidic residues) spans 694 to 706 (EGDVIDADFTDSK).

It belongs to the heat shock protein 70 family.

Its subcellular location is the plastid. It is found in the chloroplast stroma. Functionally, interacts with newly imported chloroplast proteins to assist in their maturation. The protein is Stromal 70 kDa heat shock-related protein, chloroplastic (HSP70) of Pisum sativum (Garden pea).